A 427-amino-acid polypeptide reads, in one-letter code: MKFHTVYVGKNTKIDLDFALQAQTNNFSSLEELRESFTNSGQTLSTQLFWKPVIDKLITDEGNDLTTIARTAIGENLFDLKVNLTDSVIDGTVLTKARKSFEERILNPFIEQRKEAKRIHDEEQARLERERKQLEEELKGKEKKVQELIREKTRFLSSFNNVKSFKDYWKGKGKNVEIKSQLIEVLKLAFKTDRNRTFIFLTDAFRNAVDWYYNAKKDDQDSKKKAFGDVGIELPKLGVDGIFIPNWLRWELKHRANLKLNLQSVTTKDIHNDINGWGVPKQIFWNEAKNGIEFRQTYPFKYAFQIRMKYTGDYGLKGIYWTLANWGLGGIPPEWKGEMELVLNVDGQLADWITSKKDYPGTLFQFRDDKLLFTLHITQWINVQDQRFKGLLKKQQLDVLEPWGGDIKVPVVDLASYLHFLILADKS.

This sequence belongs to the MG032/MG096/MG288 family.

This is an uncharacterized protein from Mycoplasma pneumoniae (strain ATCC 29342 / M129 / Subtype 1) (Mycoplasmoides pneumoniae).